Consider the following 208-residue polypeptide: MATQAAGIFNSAITTAATSGVKKLHFFSTTHRPKSLSFTKTAIRAEKTDSSAAAAAAPATKEAPVGFTPPQLDPNTPSPIFAGSTGGLLRKAQVEEFYVITWNSPKEQIFEMPTGGAAIMREGPNLLKLARKEQCLALGTRLRSKYKITYQFYRVFPNGEVQYLHPKDGVYPEKANPGREGVGLNMRSIGKNVSPIEVKFTGKQSYDL.

Residues 1-45 (MATQAAGIFNSAITTAATSGVKKLHFFSTTHRPKSLSFTKTAIRA) constitute a chloroplast transit peptide. T48 carries the phosphothreonine modification. Positions 49–72 (DSSAAAAAAPATKEAPVGFTPPQL) are disordered. Residues 50–64 (SSAAAAAAPATKEAP) are compositionally biased toward low complexity. The interval 141–149 (RLRSKYKIT) is ferredoxin and ferredoxin-oxidoreductase binding.

The protein belongs to the PsaD family. Interacts with PGRL1A and PGRL1B. Phosphorylated by a threonine specific thylakoid kinase in a light activated and redox-dependent manner.

Its subcellular location is the plastid. The protein localises to the chloroplast thylakoid membrane. Its function is as follows. PsaD can form complexes with ferredoxin and ferredoxin-oxidoreductase in photosystem I (PS I) reaction center. PSAD may encode the ferredoxin-docking protein. This Arabidopsis thaliana (Mouse-ear cress) protein is Photosystem I reaction center subunit II-1, chloroplastic (psaD1).